Reading from the N-terminus, the 243-residue chain is Type III pantothenate kinase (243 aa).

6–13 (DGGNTFIK) lines the ATP pocket. Residues Tyr87 and 94 to 97 (GKDR) each bind substrate. Asp96 serves as the catalytic Proton acceptor. Residue Asp117 participates in K(+) binding. Thr120 contributes to the ATP binding site. Residue Thr172 participates in substrate binding.

The protein belongs to the type III pantothenate kinase family. As to quaternary structure, homodimer. The cofactor is NH4(+). K(+) serves as cofactor.

Its subcellular location is the cytoplasm. The catalysed reaction is (R)-pantothenate + ATP = (R)-4'-phosphopantothenate + ADP + H(+). It functions in the pathway cofactor biosynthesis; coenzyme A biosynthesis; CoA from (R)-pantothenate: step 1/5. Functionally, catalyzes the phosphorylation of pantothenate (Pan), the first step in CoA biosynthesis. This Christiangramia forsetii (strain DSM 17595 / CGMCC 1.15422 / KT0803) (Gramella forsetii) protein is Type III pantothenate kinase.